The sequence spans 81 residues: Photosystem I iron-sulfur center (81 aa).

2 consecutive 4Fe-4S ferredoxin-type domains span residues 2–31 and 39–68; these read SHSV…MVPW and IAAS…IRVY. The [4Fe-4S] cluster site is built by cysteine 11, cysteine 14, cysteine 17, cysteine 21, cysteine 48, cysteine 51, cysteine 54, and cysteine 58.

In terms of assembly, the cyanobacterial PSI reaction center is composed of one copy each of PsaA,B,C,D,E,F,I,J,K,L,M and X, and forms trimeric complexes. The cofactor is [4Fe-4S] cluster.

The protein localises to the cellular thylakoid membrane. The enzyme catalyses reduced [plastocyanin] + hnu + oxidized [2Fe-2S]-[ferredoxin] = oxidized [plastocyanin] + reduced [2Fe-2S]-[ferredoxin]. Its function is as follows. Apoprotein for the two 4Fe-4S centers FA and FB of photosystem I (PSI); essential for photochemical activity. FB is the terminal electron acceptor of PSI, donating electrons to ferredoxin. The C-terminus interacts with PsaA/B/D and helps assemble the protein into the PSI complex. Required for binding of PsaD and PsaE to PSI. PSI is a plastocyanin/cytochrome c6-ferredoxin oxidoreductase, converting photonic excitation into a charge separation, which transfers an electron from the donor P700 chlorophyll pair to the spectroscopically characterized acceptors A0, A1, FX, FA and FB in turn. This chain is Photosystem I iron-sulfur center, found in Synechococcus elongatus (strain ATCC 33912 / PCC 7942 / FACHB-805) (Anacystis nidulans R2).